Reading from the N-terminus, the 113-residue chain is 14 kDa zinc-binding protein (113 aa).

Positions 3–113 (IFGKIISKEI…GGRQMNWPPG (111 aa)) constitute an HIT domain. The Histidine triad motif motif lies at 97 to 101 (HIHVH).

As to quaternary structure, homodimer.

The polypeptide is 14 kDa zinc-binding protein (Brassica juncea (Indian mustard)).